Here is a 78-residue protein sequence, read N- to C-terminus: Acyl carrier protein (78 aa).

One can recognise a Carrier domain in the interval 1 to 76; the sequence is MALFEDIQAV…DVVKYIEDNK (76 aa). Residue S36 is modified to O-(pantetheine 4'-phosphoryl)serine.

This sequence belongs to the acyl carrier protein (ACP) family. 4'-phosphopantetheine is transferred from CoA to a specific serine of apo-ACP by AcpS. This modification is essential for activity because fatty acids are bound in thioester linkage to the sulfhydryl of the prosthetic group.

It is found in the cytoplasm. It functions in the pathway lipid metabolism; fatty acid biosynthesis. Its function is as follows. Carrier of the growing fatty acid chain in fatty acid biosynthesis. The chain is Acyl carrier protein from Helicobacter pylori (strain ATCC 700392 / 26695) (Campylobacter pylori).